A 335-amino-acid chain; its full sequence is Fructokinase-2 (335 aa).

Belongs to the carbohydrate kinase PfkB family. In terms of tissue distribution, expressed in roots, at higher levels in stems, and hardly detectable in leaves.

It carries out the reaction D-fructose + ATP = D-fructose 6-phosphate + ADP + H(+). It participates in glycan biosynthesis; starch biosynthesis. Its activity is regulated as follows. Inhibited at high fructose. Functionally, may play an important role in maintaining the flux of carbon towards starch formation. May also be involved in a sugar-sensing pathway. The sequence is that of Fructokinase-2 (FRK2) from Zea mays (Maize).